We begin with the raw amino-acid sequence, 288 residues long: ATP synthase subunit a (288 aa).

Transmembrane regions (helical) follow at residues 47 to 67, 104 to 124, 157 to 177, 199 to 219, 237 to 257, and 258 to 278; these read LDSM…FWMV, LIAP…LMDL, DPNI…FYSI, PIVQ…TLIA, LIFI…SVPW, and AIFH…LTIV.

The protein belongs to the ATPase A chain family. As to quaternary structure, F-type ATPases have 2 components, CF(1) - the catalytic core - and CF(0) - the membrane proton channel. CF(1) has five subunits: alpha(3), beta(3), gamma(1), delta(1), epsilon(1). CF(0) has three main subunits: a(1), b(2) and c(9-12). The alpha and beta chains form an alternating ring which encloses part of the gamma chain. CF(1) is attached to CF(0) by a central stalk formed by the gamma and epsilon chains, while a peripheral stalk is formed by the delta and b chains.

It is found in the cell inner membrane. In terms of biological role, key component of the proton channel; it plays a direct role in the translocation of protons across the membrane. This is ATP synthase subunit a from Psychrobacter arcticus (strain DSM 17307 / VKM B-2377 / 273-4).